The chain runs to 262 residues: Lysine 5,6-aminomutase beta subunit (262 aa).

Residues 120-262 (KIVVVGASTG…VKTLNDRMNS (143 aa)) enclose the B12-binding domain. Adenosylcob(III)alamin is bound by residues 130 to 136 (TDAHTVG) and His133. Lys144 carries the post-translational modification N6-(pyridoxal phosphate)lysine. Residues 185-192 (LVSQTVTQ), 219-223 (LCGGP), and 239-244 (FGPGRF) contribute to the adenosylcob(III)alamin site.

This sequence belongs to the KamE family. Heterotetramer of 2 alpha and 2 beta subunits. Adenosylcob(III)alamin is required as a cofactor. Requires pyridoxal 5'-phosphate as cofactor.

The enzyme catalyses (3S)-3,6-diaminohexanoate = (3S,5S)-3,5-diaminohexanoate. It carries out the reaction D-lysine = (2R,5S)-2,5-diaminohexanoate. It participates in amino-acid metabolism; lysine degradation. With respect to regulation, rapidly inactivated in the presence of D-lysine and to a lesser extent in the absence of adenosylcobalamin (Adocbl). Activity is stable in the presence of Adocbl when D-lysine is absent. Adocbl imparts thermal stability at 37 degrees Celsius. Functionally, catalyzes the migration of the L-beta-lysine and D-lysine epsilon amino group to the delta carbon to produce 3,5-diaminohexanoate and 2,5-diaminohexanoate, respectively. This is Lysine 5,6-aminomutase beta subunit (kamE) from Acetoanaerobium sticklandii (strain ATCC 12662 / DSM 519 / JCM 1433 / CCUG 9281 / NCIMB 10654 / HF) (Clostridium sticklandii).